The primary structure comprises 520 residues: RING-type E3 ubiquitin-protein ligase PPIL2 (520 aa).

A U-box domain is found at 35–108; the sequence is RRLPFDHCSL…GKYHCPVLFT (74 aa). The stretch at 197-217 forms a coiled coil; sequence LKNTNAETRETLQELYKEFKG. Lys-216 is covalently cross-linked (Glycyl lysine isopeptide (Lys-Gly) (interchain with G-Cter in SUMO2)). Residues 278-433 form the PPIase cyclophilin-type domain; the sequence is KKGYVRLHTN…EEIRIDATTV (156 aa). Residues 456-520 form a disordered region; sequence APETKVKSSQ…SRGFGDFSSW (65 aa). Residues 463–474 are compositionally biased toward low complexity; the sequence is SSQPQAGSQGPQ. Ser-470 bears the Phosphoserine mark. Lys-482 carries the N6-acetyllysine modification.

It belongs to the cyclophilin-type PPIase family. PPIL2 subfamily. In terms of assembly, component of the minor spliceosome, which splices U12-type introns. Within this complex, interacts with PRPF8/PRP8, EFTUD2/SNU114 and PLRG1. Interacts with isoform 2 of BSG. Interacts (via the PPIase cyclophilin-type domain) with CRNKL1; they may form a trimeric complex with HSP90. As to expression, highest expression in thymus, pancreas and testis. Also detected in heart, placenta, lung, liver, skeletal muscle, kidney, spleen, prostate, ovary, small intestine and colon. Poorly detected in brain and leukocytes. Strong protein expression in lymph node (cortical, paracortical and medullar regions), thyroid (follicular epithelial cells), testis (developing spermatozoa), stomach (cells lining the gastric pit), pancreas, kidney (proximal and distal-tubule cells and collecting duct cells but not in glomeruli), endometrium and colon (goblet cells). Moderate protein expression in spleen, prostate (epithelium and squamous cell carcinomas), placenta and adrenal gland. Weak protein expression in liver, heart, breast, ovary, and lung. No protein expression in brain and bladder. High protein expression in most lymphomas and melanomas.

The protein localises to the nucleus. It catalyses the reaction S-ubiquitinyl-[E2 ubiquitin-conjugating enzyme]-L-cysteine + [acceptor protein]-L-lysine = [E2 ubiquitin-conjugating enzyme]-L-cysteine + N(6)-ubiquitinyl-[acceptor protein]-L-lysine.. The protein operates within protein modification; protein ubiquitination. Has a ubiquitin-protein ligase activity acting as an E3 ubiquitin protein ligase or as an ubiquitin-ubiquitin ligase promoting elongation of ubiquitin chains on substrates. By mediating 'Lys-48'-linked polyubiquitination of proteins could target them for proteasomal degradation. May also function as a chaperone, playing a role in transport to the cell membrane of BSG/Basigin for instance. Probable inactive PPIase with no peptidyl-prolyl cis-trans isomerase activity. As a component of the minor spliceosome, involved in the splicing of U12-type introns in pre-mRNAs. The sequence is that of RING-type E3 ubiquitin-protein ligase PPIL2 from Homo sapiens (Human).